A 273-amino-acid chain; its full sequence is Exosporium protein C (273 aa).

It is found in the spore wall. The chain is Exosporium protein C from Clostridium sporogenes (strain ATCC 15579).